Here is a 169-residue protein sequence, read N- to C-terminus: Peptide deformylase (169 aa).

Fe cation-binding residues include cysteine 91 and histidine 133. Residue glutamate 134 is part of the active site. A Fe cation-binding site is contributed by histidine 137.

It belongs to the polypeptide deformylase family. Requires Fe(2+) as cofactor.

The enzyme catalyses N-terminal N-formyl-L-methionyl-[peptide] + H2O = N-terminal L-methionyl-[peptide] + formate. In terms of biological role, removes the formyl group from the N-terminal Met of newly synthesized proteins. Requires at least a dipeptide for an efficient rate of reaction. N-terminal L-methionine is a prerequisite for activity but the enzyme has broad specificity at other positions. The protein is Peptide deformylase of Salmonella agona (strain SL483).